Consider the following 204-residue polypeptide: Probable GTP-binding protein EngB (204 aa).

An EngB-type G domain is found at 22 to 197 (GFPEIAFVGR…LAEFDNVLSI (176 aa)). GTP-binding positions include 30 to 37 (GRSNVGKS), 57 to 61 (GKTRQ), 75 to 78 (DLPG), 144 to 147 (NKVD), and 176 to 178 (FSA). Mg(2+) contacts are provided by Ser37 and Thr59.

This sequence belongs to the TRAFAC class TrmE-Era-EngA-EngB-Septin-like GTPase superfamily. EngB GTPase family. It depends on Mg(2+) as a cofactor.

Functionally, necessary for normal cell division and for the maintenance of normal septation. This is Probable GTP-binding protein EngB from Ruminiclostridium cellulolyticum (strain ATCC 35319 / DSM 5812 / JCM 6584 / H10) (Clostridium cellulolyticum).